The sequence spans 130 residues: Prefoldin subunit alpha (130 aa).

This sequence belongs to the prefoldin subunit alpha family. As to quaternary structure, heterohexamer of two alpha and four beta subunits.

The protein resides in the cytoplasm. Molecular chaperone capable of stabilizing a range of proteins. Seems to fulfill an ATP-independent, HSP70-like function in archaeal de novo protein folding. The protein is Prefoldin subunit alpha of Thermoplasma volcanium (strain ATCC 51530 / DSM 4299 / JCM 9571 / NBRC 15438 / GSS1).